The sequence spans 223 residues: MNRIIPPENLPELLERAHMMAGVSLAQIAAQRGLSVPKDLKRDKGWVGQLIEMELGATAGSKPEQDFLHLGVELKTIPIDSQGRPLETTYVCVAPLSNIQGLTWQNSLVCHKLQRVLWVPVEGERHIPVAERRIGTPILWEPDPQELQLLQQDWEEIMELIALGKVEKLTARHGEVLQLRPKAANSKALTQSIAEDGSLKMTNPRGFYLKTSFTAMILNKVFG.

Belongs to the MutH family.

The protein resides in the cytoplasm. Functionally, sequence-specific endonuclease that cleaves unmethylated GATC sequences. It is involved in DNA mismatch repair. The chain is DNA mismatch repair protein MutH from Shewanella baltica (strain OS185).